A 363-amino-acid polypeptide reads, in one-letter code: MKESVIRKLEGLLERNEEVLALLGDASVIADQERFRALSKEYSQLEEVVAGFKAYQQALADLESAKEMLEEDDAEMREMAQEEIKAAKAELERLEAELQILLLPKDPNDDTNAFIEIRAGAGGDEAAIFAGDLFRMYSRYAEANRWQLEIMSSNEGEHGGFKEIIVKVSGEGAYGKLKFESGGHRVQRVPETESQGRVHTSAVTVVVMHEVPEAEAISINPADLKVDTFRSSGAGGQHVNKTDSAIRITHIPTGIVVECQDQRSQHKNRAQAMSVLAARIQAVEDEKRRSAEESTRRSLVASGDRSERVRTYNFPQGRVSEHRINLTLYRLNEVMEGDLDAILGPLMQEHQADLLAALADEQG.

Gln237 bears the N5-methylglutamine mark. A compositionally biased stretch (basic and acidic residues) spans Glu284–Arg296. Residues Glu284–Arg305 are disordered.

This sequence belongs to the prokaryotic/mitochondrial release factor family. Methylated by PrmC. Methylation increases the termination efficiency of RF1.

It localises to the cytoplasm. In terms of biological role, peptide chain release factor 1 directs the termination of translation in response to the peptide chain termination codons UAG and UAA. The polypeptide is Peptide chain release factor 1 (Shewanella sp. (strain MR-4)).